Consider the following 464-residue polypeptide: UDP-N-acetylmuramoylalanine--D-glutamate ligase (464 aa).

127–133 provides a ligand contact to ATP; that stretch reads GSNGKST.

This sequence belongs to the MurCDEF family.

It is found in the cytoplasm. It carries out the reaction UDP-N-acetyl-alpha-D-muramoyl-L-alanine + D-glutamate + ATP = UDP-N-acetyl-alpha-D-muramoyl-L-alanyl-D-glutamate + ADP + phosphate + H(+). Its pathway is cell wall biogenesis; peptidoglycan biosynthesis. Functionally, cell wall formation. Catalyzes the addition of glutamate to the nucleotide precursor UDP-N-acetylmuramoyl-L-alanine (UMA). The polypeptide is UDP-N-acetylmuramoylalanine--D-glutamate ligase (Roseobacter denitrificans (strain ATCC 33942 / OCh 114) (Erythrobacter sp. (strain OCh 114))).